We begin with the raw amino-acid sequence, 348 residues long: Small ribosomal subunit protein mS45 (348 aa).

The segment covering 37-57 (SCSSSSPQSSQPTTHQQQCSS) has biased composition (low complexity). The tract at residues 37 to 63 (SCSSSSPQSSQPTTHQQQCSSFSTTAP) is disordered.

It belongs to the mitochondrion-specific ribosomal protein mS45 family. As to quaternary structure, component of the mitochondrial small ribosomal subunit (mt-SSU). Mature N.crassa 74S mitochondrial ribosomes consist of a small (37S) and a large (54S) subunit. The 37S small subunit contains a 16S ribosomal RNA (16S mt-rRNA) and 32 different proteins. The 54S large subunit contains a 23S rRNA (23S mt-rRNA) and 42 different proteins.

The protein resides in the mitochondrion. In terms of biological role, component of the mitochondrial ribosome (mitoribosome), a dedicated translation machinery responsible for the synthesis of mitochondrial genome-encoded proteins, including at least some of the essential transmembrane subunits of the mitochondrial respiratory chain. The mitoribosomes are attached to the mitochondrial inner membrane and translation products are cotranslationally integrated into the membrane. This Neurospora crassa (strain ATCC 24698 / 74-OR23-1A / CBS 708.71 / DSM 1257 / FGSC 987) protein is Small ribosomal subunit protein mS45 (mrps35).